The following is a 549-amino-acid chain: YTH domain-containing family protein 1 (549 aa).

Disordered stretches follow at residues 29-102 (QAPW…QPNM), 139-165 (GHPP…RQSG), 243-262 (GASG…QQAV), 273-298 (DSTE…AKGP), and 425-458 (REDS…SENK). Positions 49-61 (VVGQTQSSPQYNG) are enriched in polar residues. Low complexity predominate over residues 71–102 (QGYYMPQQQQQQQQMPQYYGGPMSPSQPQPNM). Composition is skewed to polar residues over residues 251-260 (TGPSATTPQQ) and 273-289 (DSTE…TPTA). A YTH domain is found at 307–513 (DRFFVLKSLT…SVGRRLIGLF (207 aa)).

This sequence belongs to the YTHDF family. YTHDF1 subfamily.

In terms of biological role, specifically recognizes and binds N6-methyladenosine (m6A)-containing mRNAs, and regulates their stability. M6A is a modification present at internal sites of mRNAs and some non-coding RNAs and plays a role in mRNA stability and processing. Directly interacts with the acid phosphatase APHA mRNA to increase its stability. In Cryphonectria parasitica (strain ATCC 38755 / EP155), this protein is YTH domain-containing family protein 1.